The sequence spans 373 residues: XK-related protein 9 (373 aa).

8 consecutive transmembrane segments (helical) span residues phenylalanine 8–leucine 28, tyrosine 38–phenylalanine 58, methionine 166–leucine 186, leucine 206–valine 226, valine 230–histidine 250, serine 256–phenylalanine 276, valine 295–serine 315, and phenylalanine 318–valine 338.

This sequence belongs to the XK family. Post-translationally, undergoes proteolytic processing by caspase-3 (CASP3), caspase-6 (CASP6) and caspase-7 (CASP7) to generate the XK-related protein 9, processed form, leading to its activation. In terms of tissue distribution, highly expressed in the small intestines; weakly expressed in the pancreas, liver, stomach, and large intestines.

Its subcellular location is the cell membrane. It catalyses the reaction a 1,2-diacyl-sn-glycero-3-phospho-L-serine(in) = a 1,2-diacyl-sn-glycero-3-phospho-L-serine(out). Its activity is regulated as follows. Activated upon caspase cleavage to generate the XK-related protein 9, processed form. Does not act prior the onset of apoptosis. Its function is as follows. Phospholipid scramblase that promotes phosphatidylserine exposure on apoptotic cell surface. Phosphatidylserine is a specific marker only present at the surface of apoptotic cells and acts as a specific signal for engulfment. This chain is XK-related protein 9, found in Mus musculus (Mouse).